A 241-amino-acid chain; its full sequence is Pyridoxine/pyridoxamine 5'-phosphate oxidase (241 aa).

Positions 1–35 (MASNPPSAASPRRTAVSPGADRPDGPDPAGQRQSY) are disordered. Substrate-binding positions include 32-35 (RQSY) and Lys-92. FMN is bound by residues 87–92 (RTVLLK), 102–103 (YT), Arg-108, Lys-109, and Gln-131. Residues Tyr-149, Arg-153, and Ser-157 each coordinate substrate. FMN contacts are provided by residues 166–167 (QS) and Trp-212. A substrate-binding site is contributed by 218-220 (RLH). Arg-222 provides a ligand contact to FMN.

It belongs to the pyridoxamine 5'-phosphate oxidase family. In terms of assembly, homodimer. Requires FMN as cofactor.

It carries out the reaction pyridoxamine 5'-phosphate + O2 + H2O = pyridoxal 5'-phosphate + H2O2 + NH4(+). The catalysed reaction is pyridoxine 5'-phosphate + O2 = pyridoxal 5'-phosphate + H2O2. The protein operates within cofactor metabolism; pyridoxal 5'-phosphate salvage; pyridoxal 5'-phosphate from pyridoxamine 5'-phosphate: step 1/1. It participates in cofactor metabolism; pyridoxal 5'-phosphate salvage; pyridoxal 5'-phosphate from pyridoxine 5'-phosphate: step 1/1. In terms of biological role, catalyzes the oxidation of either pyridoxine 5'-phosphate (PNP) or pyridoxamine 5'-phosphate (PMP) into pyridoxal 5'-phosphate (PLP). In Frankia alni (strain DSM 45986 / CECT 9034 / ACN14a), this protein is Pyridoxine/pyridoxamine 5'-phosphate oxidase.